A 288-amino-acid polypeptide reads, in one-letter code: Cyclin-dependent kinase 2 homolog (288 aa).

Residues 4 to 284 (YHGLEKIGEG…AKQALEHAYF (281 aa)) enclose the Protein kinase domain. Residues 10–18 (IGEGTYGVV) and Lys32 contribute to the ATP site. Thr14 carries the post-translational modification Phosphothreonine. Tyr15 is subject to Phosphotyrosine. Residue Asp125 is the Proton acceptor of the active site. At Thr158 the chain carries Phosphothreonine.

It belongs to the protein kinase superfamily. CMGC Ser/Thr protein kinase family. CDC2/CDKX subfamily. May form a complex composed of at least the catalytic subunit CRK2 and a cyclin. Mg(2+) is required as a cofactor. In terms of processing, autophosphorylates in presence of cyclin cyc-1 but not in presence of cyclin cyc-3.

Its subcellular location is the cytoplasm. It catalyses the reaction L-seryl-[protein] + ATP = O-phospho-L-seryl-[protein] + ADP + H(+). The catalysed reaction is L-threonyl-[protein] + ATP = O-phospho-L-threonyl-[protein] + ADP + H(+). The enzyme catalyses [DNA-directed RNA polymerase] + ATP = phospho-[DNA-directed RNA polymerase] + ADP + H(+). With respect to regulation, phosphorylation at Thr-14 or Tyr-15 inactivates the enzyme, while phosphorylation at Thr-158 activates it. Activated by cyclin cyc-1 in vitro. Activated by cyclin cyc-3 in vitro. Serine/threonine-protein kinase. Involved in the control of the cell cycle. Required for entry into S-phase and mitosis. Probable component of the kinase complex that phosphorylates the repetitive C-terminus of RNA polymerase II. In schizonts, phosphorylates ORC1 resulting in its dissociation from DNA, relocalization to the cytoplasm and likely its degradation. In Plasmodium falciparum (isolate 3D7), this protein is Cyclin-dependent kinase 2 homolog.